An 833-amino-acid chain; its full sequence is Glycerol-3-phosphate acyltransferase (833 aa).

The HXXXXD motif motif lies at 309-314 (CHRSHI).

This sequence belongs to the GPAT/DAPAT family.

It is found in the cell inner membrane. It carries out the reaction sn-glycerol 3-phosphate + an acyl-CoA = a 1-acyl-sn-glycero-3-phosphate + CoA. The protein operates within phospholipid metabolism; CDP-diacylglycerol biosynthesis; CDP-diacylglycerol from sn-glycerol 3-phosphate: step 1/3. The sequence is that of Glycerol-3-phosphate acyltransferase from Pseudomonas syringae pv. syringae (strain B728a).